Here is a 143-residue protein sequence, read N- to C-terminus: Transcription antitermination protein NusB (143 aa).

Belongs to the NusB family.

Involved in transcription antitermination. Required for transcription of ribosomal RNA (rRNA) genes. Binds specifically to the boxA antiterminator sequence of the ribosomal RNA (rrn) operons. This is Transcription antitermination protein NusB from Methylacidiphilum infernorum (isolate V4) (Methylokorus infernorum (strain V4)).